The primary structure comprises 271 residues: Protein MGF 360-15R (271 aa).

Belongs to the asfivirus MGF 360 family.

Functionally, plays a role in virus cell tropism, and may be required for efficient virus replication in macrophages. This African swine fever virus (isolate Tick/Malawi/Lil 20-1/1983) (ASFV) protein is Protein MGF 360-15R.